A 150-amino-acid chain; its full sequence is Transcriptional repressor NrdR (150 aa).

The segment at 3-34 (CPFCHHPQSRVIDSRTVENGFVTRRRRQCTKC) is a zinc-finger region. The 91-residue stretch at 46–136 (LLVEKRNGVT…VYKSFSSMED (91 aa)) folds into the ATP-cone domain.

It belongs to the NrdR family. Zn(2+) serves as cofactor.

Its function is as follows. Negatively regulates transcription of bacterial ribonucleotide reductase nrd genes and operons by binding to NrdR-boxes. The polypeptide is Transcriptional repressor NrdR (Corynebacterium kroppenstedtii (strain DSM 44385 / JCM 11950 / CIP 105744 / CCUG 35717)).